The sequence spans 731 residues: ARS-binding factor 1 (731 aa).

Residue Lys18 forms a Glycyl lysine isopeptide (Lys-Gly) (interchain with G-Cter in ubiquitin) linkage. Composition is skewed to low complexity over residues 84–99 (ASSE…NTNP) and 111–129 (NNMN…NKVS). 4 disordered regions span residues 84–132 (ASSE…SNDS), 146–227 (ANTH…DDVH), 251–308 (VANV…PSSI), and 439–463 (YNDL…GTNL). A compositionally biased stretch (basic and acidic residues) spans 149–161 (HPDDTNDKVESRS). The segment covering 177–186 (IFKQQGVTIK) has biased composition (polar residues). Thr189 carries the phosphothreonine modification. A Phosphoserine modification is found at Ser193. Composition is skewed to low complexity over residues 270 to 308 (TNNN…PSSI) and 445 to 454 (SSSSNNNNNN). Ser467 is subject to Phosphoserine. Positions 475–539 (EISSAGTSSN…PSVNKWSKPD (65 aa)) are disordered. The segment covering 481 to 510 (TSSNTTKNVNNNKNDSNDDNNGNNNNDASN) has biased composition (low complexity). Ser554 and Ser618 each carry phosphoserine. Disordered stretches follow at residues 590-643 (RSID…DDKL) and 687-731 (KNTT…LRGQ). Ser624 carries the post-translational modification Phosphoserine; by PKC. 2 C-terminal sequence regions span residues 624 to 628 (SKRQH) and 639 to 662 (EDDK…KEVE). Over residues 634 to 643 (LEERNEDDKL) the composition is skewed to basic and acidic residues. Basic residues predominate over residues 689–698 (TTHHNNHHSQ). Ser720 bears the Phosphoserine; by CK2 mark.

The protein belongs to the BAF1 family. As to quaternary structure, component of the global genome repair (GGR) complex composed of at least ABF1, RAD7 and RAD16. Interacts with PSE1. Extensively phosphorylated on Ser and Thr residues.

The protein localises to the nucleus. In terms of biological role, general regulatory factor (GRF) that contributes to transcriptional activation of a large number of genes, as well as to DNA replication, silencing and telomere structure. Involved in the transcription activation of a subset of ribosomal protein genes. Binds the ARS-elements found in many promoters. Binds to the sequence 5'-TCN(7)ACG-3'. Influences on genome-wide nucleosome occupancy and affects chromatin structure, and probably dynamics. As a component of the global genome repair (GGR) complex, promotes global genome nucleotide excision repair (GG-NER) which removes DNA damage from nontranscribing DNA. Component of the regulatory network controlling mitotic and meiotic cell cycle progression. The sequence is that of ARS-binding factor 1 (ABF1) from Saccharomyces cerevisiae (strain ATCC 204508 / S288c) (Baker's yeast).